We begin with the raw amino-acid sequence, 689 residues long: 1,4-alpha-glucan-branching enzyme (689 aa).

Tryptophan 93 and lysine 128 together coordinate (1,4-alpha-D-glucosyl)n. The Nucleophile role is filled by aspartate 345. Glutamate 400 functions as the Proton donor in the catalytic mechanism.

The protein belongs to the glycosyl hydrolase 13 family. GlgB subfamily.

The protein localises to the cytoplasm. It catalyses the reaction Transfers a segment of a (1-&gt;4)-alpha-D-glucan chain to a primary hydroxy group in a similar glucan chain.. Its pathway is glycan biosynthesis; glycogen biosynthesis. In terms of biological role, glycogen-branching enzyme participates in the glycogen biosynthetic process along with glycogenin and glycogen synthase. Generates alpha-1,6-glucosidic branches from alpha-1,4-linked glucose chains, to increase solubility of the glycogen polymer. This chain is 1,4-alpha-glucan-branching enzyme (gbeA), found in Aspergillus oryzae (strain ATCC 42149 / RIB 40) (Yellow koji mold).